A 443-amino-acid polypeptide reads, in one-letter code: Cobyrinate a,c-diamide synthase (443 aa).

The GATase cobBQ-type domain maps to Lys248–Tyr433. Cys327 serves as the catalytic Nucleophile.

Belongs to the CobB/CbiA family. Mg(2+) is required as a cofactor.

It carries out the reaction cob(II)yrinate + 2 L-glutamine + 2 ATP + 2 H2O = cob(II)yrinate a,c diamide + 2 L-glutamate + 2 ADP + 2 phosphate + 2 H(+). It catalyses the reaction Ni-sirohydrochlorin + 2 L-glutamine + 2 ATP + 2 H2O = Ni-sirohydrochlorin a,c-diamide + 2 L-glutamate + 2 ADP + 2 phosphate + 2 H(+). It participates in cofactor biosynthesis; adenosylcobalamin biosynthesis; cob(II)yrinate a,c-diamide from sirohydrochlorin (anaerobic route): step 10/10. Its function is as follows. Catalyzes the ATP-dependent amidation of the two carboxylate groups at positions a and c of cobyrinate, using either L-glutamine or ammonia as the nitrogen source. Involved in the biosynthesis of the unique nickel-containing tetrapyrrole coenzyme F430, the prosthetic group of methyl-coenzyme M reductase (MCR), which plays a key role in methanogenesis and anaerobic methane oxidation. Catalyzes the ATP-dependent amidation of the two carboxylate groups at positions a and c of Ni-sirohydrochlorin, using L-glutamine or ammonia as the nitrogen source. The chain is Cobyrinate a,c-diamide synthase from Methanocaldococcus jannaschii (strain ATCC 43067 / DSM 2661 / JAL-1 / JCM 10045 / NBRC 100440) (Methanococcus jannaschii).